Reading from the N-terminus, the 119-residue chain is Large ribosomal subunit protein uL18 (119 aa).

Belongs to the universal ribosomal protein uL18 family. In terms of assembly, part of the 50S ribosomal subunit; part of the 5S rRNA/L5/L18/L25 subcomplex. Contacts the 5S and 23S rRNAs.

Its function is as follows. This is one of the proteins that bind and probably mediate the attachment of the 5S RNA into the large ribosomal subunit, where it forms part of the central protuberance. This Helicobacter pylori (strain HPAG1) protein is Large ribosomal subunit protein uL18.